A 447-amino-acid chain; its full sequence is Histidine--tRNA ligase (447 aa).

This sequence belongs to the class-II aminoacyl-tRNA synthetase family. In terms of assembly, homodimer.

It localises to the cytoplasm. The enzyme catalyses tRNA(His) + L-histidine + ATP = L-histidyl-tRNA(His) + AMP + diphosphate + H(+). This Synechocystis sp. (strain ATCC 27184 / PCC 6803 / Kazusa) protein is Histidine--tRNA ligase (hisS).